The following is a 379-amino-acid chain: Flagellin A (379 aa).

2 coiled-coil regions span residues 103–128 (TNSA…RIAE) and 302–341 (YVDS…IKDT).

The protein belongs to the bacterial flagellin family. In terms of assembly, heteromer of multiple flagellin subunits including FlaA, FlaB, FlaC, FlaD and possibly FlaE.

It localises to the secreted. The protein localises to the bacterial flagellum. Functionally, flagellin is the subunit protein which polymerizes to form the filaments of bacterial flagella. FlaA is essential for flagellar synthesis and full motility. Important for virulence at two different levels: is needed for crossing the fish integument and may play a role once the bacterium has entered the host. In Vibrio anguillarum (Listonella anguillarum), this protein is Flagellin A (flaA).